The primary structure comprises 262 residues: MIHETAQIHPSAVIEGDVTIEANVSVGPFSYISGNVTIGEGTEVMSHVVIKGDTIIGKDNRIFSFAIIGEESQDKKYGGEATKVVVGDRNFIRESVQIHRGTVQDRGVTTVGNDNLLCVNVHIAHDCIVGSNIIMGNNATLAGHVTIEDYAIVSALSPVHQFCTVGAHSFIGGASVVVQDVPPFVMAQGNHCKPFGINIEGLKRRGFEKPEIHAIRRAYKALYRNGNTLEEAKEEIKTEIEAFPVLQGFLDLFEKSTRGIIR.

This sequence belongs to the transferase hexapeptide repeat family. LpxA subfamily. Homotrimer.

It localises to the cytoplasm. It carries out the reaction a (3R)-hydroxyacyl-[ACP] + UDP-N-acetyl-alpha-D-glucosamine = a UDP-3-O-[(3R)-3-hydroxyacyl]-N-acetyl-alpha-D-glucosamine + holo-[ACP]. It functions in the pathway glycolipid biosynthesis; lipid IV(A) biosynthesis; lipid IV(A) from (3R)-3-hydroxytetradecanoyl-[acyl-carrier-protein] and UDP-N-acetyl-alpha-D-glucosamine: step 1/6. In terms of biological role, involved in the biosynthesis of lipid A, a phosphorylated glycolipid that anchors the lipopolysaccharide to the outer membrane of the cell. The chain is Acyl-[acyl-carrier-protein]--UDP-N-acetylglucosamine O-acyltransferase from Aliivibrio salmonicida (strain LFI1238) (Vibrio salmonicida (strain LFI1238)).